A 26-amino-acid chain; its full sequence is Acetylcholine receptor subunit delta (26 aa).

This sequence belongs to the ligand-gated ion channel (TC 1.A.9) family. Acetylcholine receptor (TC 1.A.9.1) subfamily. Pentamer of two alpha chains, and one each of the beta, delta, and gamma chains.

It localises to the postsynaptic cell membrane. The protein resides in the cell membrane. It catalyses the reaction K(+)(in) = K(+)(out). The enzyme catalyses Na(+)(in) = Na(+)(out). After binding acetylcholine, the AChR responds by an extensive change in conformation that affects all subunits and leads to opening of an ion-conducting channel across the plasma membrane. The sequence is that of Acetylcholine receptor subunit delta (chrnd) from Electrophorus electricus (Electric eel).